The sequence spans 158 residues: Cyclic pyranopterin monophosphate synthase (158 aa).

Residues 75–77 (LCH) and 113–114 (ME) each bind substrate. The active site involves Asp-128.

Belongs to the MoaC family. Homohexamer; trimer of dimers.

It catalyses the reaction (8S)-3',8-cyclo-7,8-dihydroguanosine 5'-triphosphate = cyclic pyranopterin phosphate + diphosphate. Its pathway is cofactor biosynthesis; molybdopterin biosynthesis. Catalyzes the conversion of (8S)-3',8-cyclo-7,8-dihydroguanosine 5'-triphosphate to cyclic pyranopterin monophosphate (cPMP). The sequence is that of Cyclic pyranopterin monophosphate synthase from Histophilus somni (strain 129Pt) (Haemophilus somnus).